The sequence spans 391 residues: 2-deoxy-scyllo-inosose synthase (391 aa).

NAD(+) contacts are provided by residues aspartate 42, glutamate 73–lysine 76, glycine 105–asparagine 109, threonine 129–threonine 130, serine 140–lysine 142, and lysine 151–asparagine 152. The active site involves lysine 142. Co(2+) is bound at residue glutamate 184. Glutamate 244 is a catalytic residue. Histidine 247 and histidine 263 together coordinate Co(2+).

It belongs to the sugar phosphate cyclases superfamily. DOI synthase family. NAD(+) serves as cofactor. The cofactor is Co(2+).

The enzyme catalyses D-glucose 6-phosphate = 2-deoxy-L-scyllo-inosose + phosphate. It participates in metabolic intermediate biosynthesis; 2-deoxystreptamine biosynthesis; 2-deoxystreptamine from D-glucose 6-phosphate: step 1/4. Its pathway is antibiotic biosynthesis; ribostamycin biosynthesis. Its function is as follows. Catalyzes the intramolecular carbocycle formation from D-glucose-6-phosphate to 2-deoxy-scyllo-inosose (DOI). The sequence is that of 2-deoxy-scyllo-inosose synthase (rbmA) from Streptomyces ribosidificus.